Here is a 501-residue protein sequence, read N- to C-terminus: 25-hydroxyvitamin D-1 alpha hydroxylase, mitochondrial (501 aa).

Cys-448 provides a ligand contact to heme.

The protein belongs to the cytochrome P450 family. Heme is required as a cofactor. As to expression, kidney.

It is found in the mitochondrion membrane. The catalysed reaction is calcidiol + 2 reduced [adrenodoxin] + O2 + 2 H(+) = calcitriol + 2 oxidized [adrenodoxin] + H2O. It carries out the reaction secalciferol + 2 reduced [adrenodoxin] + O2 + 2 H(+) = calcitetrol + 2 oxidized [adrenodoxin] + H2O. It functions in the pathway hormone biosynthesis; cholecalciferol biosynthesis. Its function is as follows. Catalyzes the conversion of 25-hydroxyvitamin D3 (25(OH)D3) to 1-alpha,25-dihydroxyvitamin D3 (1alpha,25(OH)(2)D3), and of 24,25-dihydroxyvitamin D3 (24,25(OH)(2)D3) to 1-alpha,24,25-trihydroxyvitamin D3 (1alpha,24,25(OH)(3)D3). Is also active with 25-hydroxy-24-oxo-vitamin D3. Plays an important role in normal bone growth, calcium metabolism, and tissue differentiation. This Rattus norvegicus (Rat) protein is 25-hydroxyvitamin D-1 alpha hydroxylase, mitochondrial (Cyp27b1).